The primary structure comprises 122 residues: Cytochrome b-c1 complex subunit 7-2, mitochondrial (122 aa).

It belongs to the UQCRB/QCR7 family. As to quaternary structure, component of the ubiquinol-cytochrome c oxidoreductase (cytochrome b-c1 complex, complex III, CIII), a multisubunit enzyme composed of 10 subunits. The complex is composed of 3 respiratory subunits cytochrome b (MT-CYB), cytochrome c1 (CYC1-1 or CYC1-2) and Rieske protein (UCR1-1 or UCR1-2), 2 core protein subunits MPPalpha1 (or MPPalpha2) and MPPB, and 5 low-molecular weight protein subunits QCR7-1 (or QCR7-2), UCRQ-1 (or UCRQ-2), QCR9, UCRY and probably QCR6-1 (or QCR6-2). The complex exists as an obligatory dimer and forms supercomplexes (SCs) in the inner mitochondrial membrane with NADH-ubiquinone oxidoreductase (complex I, CI), resulting in different assemblies (supercomplexes SCI(1)III(2) and SCI(2)III(4)).

Its subcellular location is the mitochondrion inner membrane. Functionally, component of the ubiquinol-cytochrome c oxidoreductase, a multisubunit transmembrane complex that is part of the mitochondrial electron transport chain which drives oxidative phosphorylation. The respiratory chain contains 3 multisubunit complexes succinate dehydrogenase (complex II, CII), ubiquinol-cytochrome c oxidoreductase (cytochrome b-c1 complex, complex III, CIII) and cytochrome c oxidase (complex IV, CIV), that cooperate to transfer electrons derived from NADH and succinate to molecular oxygen, creating an electrochemical gradient over the inner membrane that drives transmembrane transport and the ATP synthase. The cytochrome b-c1 complex catalyzes electron transfer from ubiquinol to cytochrome c, linking this redox reaction to translocation of protons across the mitochondrial inner membrane, with protons being carried across the membrane as hydrogens on the quinol. In the process called Q cycle, 2 protons are consumed from the matrix, 4 protons are released into the intermembrane space and 2 electrons are passed to cytochrome c. This is Cytochrome b-c1 complex subunit 7-2, mitochondrial (QCR7-2) from Arabidopsis thaliana (Mouse-ear cress).